A 619-amino-acid polypeptide reads, in one-letter code: Chaperone protein HscA homolog (619 aa).

Belongs to the heat shock protein 70 family.

In terms of biological role, chaperone involved in the maturation of iron-sulfur cluster-containing proteins. Has a low intrinsic ATPase activity which is markedly stimulated by HscB. This chain is Chaperone protein HscA homolog, found in Laribacter hongkongensis (strain HLHK9).